We begin with the raw amino-acid sequence, 329 residues long: Putative ubiquitin thioesterase otu1 (329 aa).

The interval R7–A89 is UBX-like. The tract at residues T85–Y127 is disordered. Polar residues predominate over residues S115–D124. An OTU domain is found at I135 to A254. A cys-loop region spans residues M140–C146. D143 is an active-site residue. Catalysis depends on C146, which acts as the Nucleophile. Positions I193 to I203 are variable-loop. The his-loop stretch occupies residues Y243–H247. I246 lines the substrate pocket. H247 is an active-site residue. The S2 site stretch occupies residues V272 to Y277. Residues I299–H323 form a C2H2-type zinc finger. H323 is a catalytic residue.

The protein localises to the cytoplasm. The protein resides in the nucleus. It carries out the reaction Thiol-dependent hydrolysis of ester, thioester, amide, peptide and isopeptide bonds formed by the C-terminal Gly of ubiquitin (a 76-residue protein attached to proteins as an intracellular targeting signal).. Its function is as follows. Hydrolase that can remove conjugated ubiquitin from proteins and may therefore play an important regulatory role at the level of protein turnover by preventing degradation. Has a role in meiosis. The polypeptide is Putative ubiquitin thioesterase otu1 (otu1) (Schizosaccharomyces pombe (strain 972 / ATCC 24843) (Fission yeast)).